The sequence spans 459 residues: MTLTFSSSAATVAVAAATVTSSARVPVYPLASSTLRGLVSFRLTAKKLFLPPLRSRGGVSVRAMSELVQDKESSVAASIAFNEAAGETPSELSHSRTFLDARSEQDLLSGIKKEAEAGRLPANVAAGMEELYWNYKNAVLSSGASRADETVVSNMSVAFDRMLLGVEDPYTFNPYHKAVREPFDYYMFVHTYIRPLIDFKNSYVGNASIFSELEDKIRQGHNIVLISNHQSEADPAVISLLLEAQSPFIGENIKCVAGDRVITDPLCKPFSMGRNLICVYSKKHMNDDPELVDMKRKANTRSLKEMATMLRSGGQLIWIAPSGGRDRPNPSTGEWFPAPFDASSVDNMRRLVEHSGAPGHIYPMSLLCYDIMPPPPQVEKEIGEKRLVGFHGTGLSIAPEINFSDVTADCESPNEAKEAYSQALYKSVNEQYEILNSAIKHRRGVEASTSRVSLSQPWN.

A chloroplast-targeting transit peptide spans 1–90; that stretch reads MTLTFSSSAA…FNEAAGETPS (90 aa). An HXXXXD motif motif is present at residues 229–234; it reads HQSEAD.

It belongs to the GPAT/DAPAT family.

Its subcellular location is the plastid. It localises to the chloroplast stroma. The enzyme catalyses sn-glycerol 3-phosphate + an acyl-CoA = a 1-acyl-sn-glycero-3-phosphate + CoA. Its pathway is phospholipid metabolism; CDP-diacylglycerol biosynthesis; CDP-diacylglycerol from sn-glycerol 3-phosphate: step 1/3. Esterifies acyl-group from acyl-ACP to the sn-1 position of glycerol-3-phosphate. The enzyme from chilling-resistant plants discriminates against non-fluid palmitic acid and selects oleic acid whereas the enzyme from sensitive plants accepts both fatty acids. This is an oleate-selective acyltransferase. The chain is Glycerol-3-phosphate acyltransferase, chloroplastic (ATS1) from Arabidopsis thaliana (Mouse-ear cress).